The sequence spans 150 residues: Clitocypin (150 aa).

This sequence belongs to the protease inhibitor I48 family. In terms of assembly, homodimer. As to expression, uniformly expressed throughout the mature fruiting body (at mRNA and protein level).

Binds and inhibits cysteine proteinases. Inhibits most strongly papain and cathepsin L, more weakly bromelain and cathepsin B while it is completely ineffective against cathepsin H. This chain is Clitocypin (Cnc1), found in Clitocybe nebularis (Clouded agaric).